The following is a 124-amino-acid chain: Small ribosomal subunit protein bS6 (124 aa).

Residues Pro-99–Ala-124 form a disordered region. Low complexity predominate over residues Pro-111–Ala-124.

Belongs to the bacterial ribosomal protein bS6 family.

Functionally, binds together with bS18 to 16S ribosomal RNA. The sequence is that of Small ribosomal subunit protein bS6 from Prochlorococcus marinus (strain MIT 9313).